A 2618-amino-acid chain; its full sequence is MTHQNHQTNGASLEDCHTNFYALTDLCGIKWRKFVNGERPNASSDPLADPILRSYSRCIQADMLCVWRRVQSTKTDHADPNALTFEMTTSTKVHPPLSLAAAKELWIFWYGEEPDLSELVDAELLRVAANQALWNGTWKGALTYECRSLLFKALHNLMERFVLTKDIVRFGKWFVQPCTSSDRLFGRSSQHLSFSFTFFVHGDTVCASIDLREHPAVRPLTKEHLTEAAAAFAAASSPPGSNGSAASAGGAVPNPGQDPNGASMDGLDGGEGAAKAAPPPHARKVMLAPFGIAGILTGNSYKASDPIAEKILEDWASFFPLCNKDNTDVPPVVEVVSGGHKMYHPTNYVLVTDLDDMEHMEFVEMQKMQSSVAGAAAESAVLASLSCPPGAASAPSSMGAAPSATAVPLGPASLNAPALAGAGVGATASSAAKEISRKAAPQAVSALERLAFQPYYDQRPTSGFTFNTNNTHIPASAAVEMPERTWQDCVMNTLHVDAAAAAAAVASSTPASGTGSLSADGDENEQNKPPQDSKQLVQQQIQQQQQRQKLWNFVDPMQKAPCICTKHLGNTPHGTPHGGASTYSRNSLGGDSSMPVASVESPATPAPSPHPNSAHSQPTSVPPAEQLLNMSPHAPTSVSNLQQPPTPIDHLLDKNTPAPTPTDQHDSKSITASPYVHQTPSVEPPSYTDHAAGGGPAGGQGLGTGPGSVPAQQPATPTAATSAGGAGSGGPSNAIGANAVGTISVKKLEMQQQTPSAAMAIKQEPGAQGRGVGGVTSTTEALNNFKRLYNPPKLTLKDPDSFYDEEWLKEVIYDFQYQEYWDYSTVKRPKMEKQRRPRYAKNLYEGQNHVKPVMPSPGSVYGSQLLSLDESASQAGGRGGGGQAAGSSGGGLVGIANSTASGSDVEADGSSFFQGLNIKTEPGLHSPSCKETSKSSGGNSSGGGSGSGGNLFTAEGLNPSLNDLEQLFETSSNDECSSVQIHTPPDSNNPSNGGCSAVTNTIEDLKRSTAVASAAVAAAAAAAASGAGNIQAEDLTKMFPTPPSHEQQHPNSSPCQTDVVMTDLSVDTTTTIITSSITTTCNTTITSSINTTTTACSNPSNSIMLAAAQAPVTVVAIQTVSKMVKQEYNLELGSPMEEPINDWDYVYRPPQQEKFVGSTRYAPLTNLPSQTQPPLTLPTGCFYQPTWSSHKSRAATLAKAAAAQQQQHQKHQALQQRIQLHQQKLQQLQLQNQQQQQAAAAAAAAASGGVGHQKHQHQHLHDLLSAAPRTPLTPSTVPQPLSSGGSQYLLNQLNCPQAPPGASMQQLMHRAGMSPISPGPGMGPYAARSSPMSRATPTHPPPPYPYDLAVASPATSTSSYLNRPLHSQEHPHMHGLGGGATGVVGHGTGGGGHMGMVAYTGDAGIVSGGTAMAAGSSSLLQELPEVNSVLVNILLYDTALNVFRDHNFDSSSVCVCNADTQKIGNIRGADSGVYVPLPGVSFNPFPSGAGGALAGQRMLNGPSSAGFGGMRMISAFGGSPASASMPGAGSGHGHGPNGGSNSSSCTPPSSNPHITGYVDDDPVECTCGFSAVVNRRLSHRAGLFYEDEVEITGIADDPGRNKQPTLLSIIQSLSRKNQNKQGPGETSSALDKIGAGGLPNGQLEQLGHAVFDLLLDQCSIIQTSSSSVHRALQSHRRRMSRQRRIFGNNGAPTASLASIANVLEFMDAHDVISLALEQSRLAFENQRMDNMMDFHGNGSSSSHQQQQLTAFHAPPPALRHKLAGIGAGRLTVHKWPYLPVGFTRSNKEIVRTMNAIQPMLQNAFHCKSRGGSGSKDASSYNTVSGPLTWRQFHRLAGRASGQCEPQPIPSVVVGYEKDWISVAPHSIHYWDKFLLEPYSYARDVVYVVVCPDNEHVVNCTRSYFRELSSTYEMCKLGKHTPIRGWDGFLQVGAARNNVPADRETTPLDDWLRTLEHAALAEQIRRYAVAFIHQLAPYLSRVPNDKTLLNPPDGSGNSHSKGGSSCSSNSSSVSGLPGGDLPTDNIKLEPGTEPQVQPMETNEIKQEPGVGKGGTAAGETKPTLILGDPLGMGETLEDINPSAIVLYVVNPFTFASDSCELERLALIALLRCYAELLKAVPDSVRSQMNIQIISLESVMELGPCGNRKRFSDEIRCLALNIFSQCRRHLVHAQSVKSLTGFGTAANMEAFLKTKDEPNRRAYKMYTAPFVLAPMHERNDKTDFSRSAGSMHGQNEHRYSVMYCNYCLSEDQAWLLATATDERGEMLEKICINIDVPNRARRRKAPARYVALKKLMDFIMGIISQTSQMWRLVIGRIGRIGHSELKSWSFLLSKQQLQKASKQFKDMCKQCTLMYPPTILSACLVTLEPDAKLRVMPDQFTPDERFSQISMQNPLATPQDVTCTHILVFPTSAVCAPFTRQFQNEPQVDDDFLTFEEEGNEDFSDADIGDLFWDTHMDRVSNHGSPGRMDDNRSWQSAGGNNFKCTPPQEVEEVGSLNQQPISVGYMVSTAPTGRMPAWFWSACPHLEDVCPVFLKTALHLHVPSIQSADDILNSTNAHQSGNDHPLDSNLTADVLRFVLEGYNALSWLALDSNTHDRLSCLPINVQTLMDLYYLTAAIA.

Composition is skewed to low complexity over residues 232 to 255, 509 to 519, and 532 to 543; these read FAAA…VPNP, TPASGTGSLSA, and DSKQLVQQQIQQ. 10 disordered regions span residues 232–279, 509–543, 569–731, 916–957, 970–995, 1036–1055, 1268–1384, 1521–1557, 1614–1633, and 1985–2060; these read FAAA…AAPP, TPAS…QIQQ, GNTP…SGGP, LNIK…AEGL, TSSN…NGGC, TKMF…SSPC, PRTP…TGVV, ASAS…ITGY, SRKN…LDKI, and KTLL…GETK. Threonine 571 and threonine 575 each carry phosphothreonine. Composition is skewed to polar residues over residues 581 to 590, 634 to 643, and 669 to 681; these read STYSRNSLGG, APTSVSNLQQ, and SITA…QTPS. Residues 692–706 are compositionally biased toward gly residues; sequence AGGGPAGGQGLGTGP. Positions 711–723 are enriched in low complexity; that stretch reads AQQPATPTAATSA. A compositionally biased stretch (gly residues) spans 939–949; it reads NSSGGGSGSGG. The span at 1272 to 1295 shows a compositional bias: polar residues; that stretch reads LTPSTVPQPLSSGGSQYLLNQLNC. Gly residues-rich tracts occupy residues 1375 to 1384 and 1528 to 1538; these read GLGGGATGVV and AGSGHGHGPNG. Low complexity predominate over residues 1539–1553; that stretch reads GSNSSSCTPPSSNPH. The segment covering 1614–1629 has biased composition (polar residues); it reads SRKNQNKQGPGETSSA. Residues 1993 to 2014 show a composition bias toward low complexity; it reads GSGNSHSKGGSSCSSNSSSVSG. A phosphoserine mark is found at serine 2472 and serine 2475.

Belongs to the Mediator complex subunit 13 family. Component of the Cdk8 module of the Mediator complex, composed of CycC, Cdk8, kto and skd.

The protein resides in the nucleus. Functionally, component of the Mediator complex, a coactivator involved in the regulated transcription of nearly all RNA polymerase II-dependent genes. Mediator functions as a bridge to convey information from gene-specific regulatory proteins to the basal RNA polymerase II transcription machinery. Mediator is recruited to promoters by direct interactions with regulatory proteins and serves as a scaffold for the assembly of a functional preinitiation complex with RNA polymerase II and the general transcription factors. Required for leg and eye development and macrochaete specification or differentiation. Negatively regulates sex comb development. Required for activated transcription of the MtnB and MtnD genes. This Drosophila melanogaster (Fruit fly) protein is Mediator of RNA polymerase II transcription subunit 13 (skd).